Reading from the N-terminus, the 183-residue chain is TATA-box-binding protein (183 aa).

2 tandem repeats follow at residues 7–83 and 99–177.

The protein belongs to the TBP family.

General factor that plays a role in the activation of archaeal genes transcribed by RNA polymerase. Binds specifically to the TATA box promoter element which lies close to the position of transcription initiation. The chain is TATA-box-binding protein from Methanothrix thermoacetophila (strain DSM 6194 / JCM 14653 / NBRC 101360 / PT) (Methanosaeta thermophila).